A 583-amino-acid polypeptide reads, in one-letter code: Penicillin-binding protein activator LpoA (583 aa).

The N-terminal stretch at 1-24 (MATILKQKLKTFFVPTAITLLLSA) is a signal peptide. Cysteine 25 is lipidated: N-palmitoyl cysteine. The S-diacylglycerol cysteine moiety is linked to residue cysteine 25.

It belongs to the LpoA family. Interacts with PBP1a.

Its subcellular location is the cell outer membrane. Its function is as follows. Regulator of peptidoglycan synthesis that is essential for the function of penicillin-binding protein 1A (PBP1a). The sequence is that of Penicillin-binding protein activator LpoA from Haemophilus ducreyi (strain 35000HP / ATCC 700724).